The sequence spans 142 residues: Large ribosomal subunit protein uL11 (142 aa).

The protein belongs to the universal ribosomal protein uL11 family. As to quaternary structure, part of the ribosomal stalk of the 50S ribosomal subunit. Interacts with L10 and the large rRNA to form the base of the stalk. L10 forms an elongated spine to which L12 dimers bind in a sequential fashion forming a multimeric L10(L12)X complex. One or more lysine residues are methylated.

Functionally, forms part of the ribosomal stalk which helps the ribosome interact with GTP-bound translation factors. The protein is Large ribosomal subunit protein uL11 of Mycoplasma mycoides subsp. mycoides SC (strain CCUG 32753 / NCTC 10114 / PG1).